Reading from the N-terminus, the 189-residue chain is Anthranilate synthase component 2 (189 aa).

The region spanning 1–189 (MILIIDNYDS…QLLKNFLDSD (189 aa)) is the Glutamine amidotransferase type-1 domain. 52–54 (GPG) is an L-glutamine binding site. Cys-79 serves as the catalytic Nucleophile; for GATase activity. L-glutamine contacts are provided by residues Gln-83 and 129-130 (SL). Active-site residues include His-169 and Glu-171.

Tetramer of two components I and two components II.

The protein resides in the plastid. Its subcellular location is the chloroplast. It catalyses the reaction chorismate + L-glutamine = anthranilate + pyruvate + L-glutamate + H(+). Its pathway is amino-acid biosynthesis; L-tryptophan biosynthesis; L-tryptophan from chorismate: step 1/5. This Porphyra purpurea (Red seaweed) protein is Anthranilate synthase component 2 (trpG).